The sequence spans 750 residues: Photosystem I P700 chlorophyll a apoprotein A1 (750 aa).

Transmembrane regions (helical) follow at residues 70-93 (VFSA…FHGA), 156-179 (LYCT…FHYH), 195-219 (LNHH…HVSL), 291-309 (IAHH…GHMY), 346-369 (WHAQ…HHMY), 385-411 (LSLF…IFMV), 433-455 (AIIS…LYIH), and 531-549 (FLVH…LILL). Residues Cys-573 and Cys-582 each contribute to the [4Fe-4S] cluster site. Transmembrane regions (helical) follow at residues 589 to 610 (HVFL…HFSW) and 664 to 686 (LSAY…MFLF). His-675 provides a ligand contact to chlorophyll a'. Residues Met-683 and Tyr-691 each coordinate chlorophyll a. Trp-692 lines the phylloquinone pocket. The helical transmembrane segment at 724-744 (AVGVTHYLLGGIATTWAFFLA) threads the bilayer.

This sequence belongs to the PsaA/PsaB family. As to quaternary structure, the PsaA/B heterodimer binds the P700 chlorophyll special pair and subsequent electron acceptors. PSI consists of a core antenna complex that captures photons, and an electron transfer chain that converts photonic excitation into a charge separation. The eukaryotic PSI reaction center is composed of at least 11 subunits. Requires P700 is a chlorophyll a/chlorophyll a' dimer, A0 is one or more chlorophyll a, A1 is one or both phylloquinones and FX is a shared 4Fe-4S iron-sulfur center. as cofactor.

The protein localises to the plastid. It localises to the chloroplast thylakoid membrane. It catalyses the reaction reduced [plastocyanin] + hnu + oxidized [2Fe-2S]-[ferredoxin] = oxidized [plastocyanin] + reduced [2Fe-2S]-[ferredoxin]. Functionally, psaA and PsaB bind P700, the primary electron donor of photosystem I (PSI), as well as the electron acceptors A0, A1 and FX. PSI is a plastocyanin-ferredoxin oxidoreductase, converting photonic excitation into a charge separation, which transfers an electron from the donor P700 chlorophyll pair to the spectroscopically characterized acceptors A0, A1, FX, FA and FB in turn. Oxidized P700 is reduced on the lumenal side of the thylakoid membrane by plastocyanin. This Nicotiana sylvestris (Wood tobacco) protein is Photosystem I P700 chlorophyll a apoprotein A1.